The sequence spans 191 residues: Neuronal calcium sensor 1 (191 aa).

Residue Gly-2 is the site of N-myristoyl glycine attachment. 4 EF-hand domains span residues 24–59 (ESEI…FPFG), 60–95 (DPSK…TSRG), 96–131 (TVEE…IYRM), and 144–179 (TPEK…DPTI). Ca(2+) is bound by residues Asp-73, Asn-75, Asp-77, Glu-84, Asp-109, Asp-111, Asp-113, Tyr-115, Glu-120, Asp-157, Asn-159, Asp-161, Gln-163, and Glu-168.

The protein belongs to the recoverin family.

The protein localises to the perikaryon. Its subcellular location is the cell projection. The protein resides in the growth cone. Its function is as follows. Neuronal calcium sensor, regulator of G protein-coupled receptor phosphorylation in a calcium dependent manner. Regulates neurite extension and branching by activity-dependent Ca(2+) influx in growth cones. This is Neuronal calcium sensor 1 from Lymnaea stagnalis (Great pond snail).